Reading from the N-terminus, the 247-residue chain is Ribosomal RNA large subunit methyltransferase E (247 aa).

The interval 1-21 (MKVNPKNSPKDNLKDSPKVSA) is disordered. Over residues 8-17 (SPKDNLKDSP) the composition is skewed to basic and acidic residues. G80, W82, D108, D124, and D153 together coordinate S-adenosyl-L-methionine. The Proton acceptor role is filled by K193.

It belongs to the class I-like SAM-binding methyltransferase superfamily. RNA methyltransferase RlmE family.

The protein resides in the cytoplasm. The catalysed reaction is uridine(2552) in 23S rRNA + S-adenosyl-L-methionine = 2'-O-methyluridine(2552) in 23S rRNA + S-adenosyl-L-homocysteine + H(+). Specifically methylates the uridine in position 2552 of 23S rRNA at the 2'-O position of the ribose in the fully assembled 50S ribosomal subunit. The chain is Ribosomal RNA large subunit methyltransferase E from Polaromonas sp. (strain JS666 / ATCC BAA-500).